The sequence spans 357 residues: MFLEKLNSATSKIKLIEEKLQDINLIKNQKKYSKIIKEYTYLEKINTKKIEYEKILSQINDNKTILEKEDQQEMKELIKQELIDLDKKKEDLEHQIKILLLPQDENDSKNIIIEIRAGTGGEEAALFANNLYSMYIKYSERKKWKTEIINFNETELGGFKEIVFEIKGKDVFKKLKYESGVHRVQRIPITESNGRLQTSAATVAVLPNIEETEIDINEKDLRIDVYRSSGAGGQHVNTTDSAVRITHLPTGIVVQCQNERSQHKNKDQAMKILRARLYEFEDSKKQEQRSSNRKQQVGSGDRSERIRTYNFPQNRITDHRANITLYKLEEFMQGELDPLLDPLTIELQEQKFKSNNI.

Q234 carries the post-translational modification N5-methylglutamine. The interval 283 to 313 is disordered; the sequence is SKKQEQRSSNRKQQVGSGDRSERIRTYNFPQ.

This sequence belongs to the prokaryotic/mitochondrial release factor family. Post-translationally, methylated by PrmC. Methylation increases the termination efficiency of RF1.

The protein resides in the cytoplasm. Its function is as follows. Peptide chain release factor 1 directs the termination of translation in response to the peptide chain termination codons UAG and UAA. The protein is Peptide chain release factor 1 of Borrelia garinii subsp. bavariensis (strain ATCC BAA-2496 / DSM 23469 / PBi) (Borreliella bavariensis).